Consider the following 153-residue polypeptide: Small ribosomal subunit protein uS7c (153 aa).

It belongs to the universal ribosomal protein uS7 family. In terms of assembly, part of the 30S ribosomal subunit.

The protein localises to the plastid. Functionally, one of the primary rRNA binding proteins, it binds directly to 16S rRNA where it nucleates assembly of the head domain of the 30S subunit. This is Small ribosomal subunit protein uS7c (rps7) from Helicosporidium sp. subsp. Simulium jonesii (Green alga).